The primary structure comprises 239 residues: C-8 sterol isomerase erg2 (239 aa).

N-linked (GlcNAc...) asparagine glycosylation occurs at asparagine 11. The helical transmembrane segment at 27-47 threads the bilayer; it reads KFGFLAVFVAIFAALYSYLDA. A glycan (N-linked (GlcNAc...) asparagine) is linked at asparagine 73.

The protein belongs to the ERG2 family.

It is found in the endoplasmic reticulum membrane. The catalysed reaction is fecosterol = episterol. The protein operates within steroid metabolism; ergosterol biosynthesis. C-8 sterol isomerase; part of the third module of ergosterol biosynthesis pathway that includes the late steps of the pathway. Erg2 catalyzes the reaction which results in unsaturation at C-7 in the B ring of sterols and thus converts fecosterol to episterol. The third module or late pathway involves the ergosterol synthesis itself through consecutive reactions that mainly occur in the endoplasmic reticulum (ER) membrane. Firstly, the squalene synthase erg9 catalyzes the condensation of 2 farnesyl pyrophosphate moieties to form squalene, which is the precursor of all steroids. Squalene synthase is crucial for balancing the incorporation of farnesyl diphosphate (FPP) into sterol and nonsterol isoprene synthesis. Secondly, squalene is converted into lanosterol by the consecutive action of the squalene epoxidase erg1 and the lanosterol synthase erg7. Then, the delta(24)-sterol C-methyltransferase erg6 methylates lanosterol at C-24 to produce eburicol. Eburicol is the substrate of the sterol 14-alpha demethylase encoded by cyp51A and cyp51B, to yield 4,4,24-trimethyl ergosta-8,14,24(28)-trienol. The C-14 reductase erg24 then reduces the C14=C15 double bond which leads to 4,4-dimethylfecosterol. A sequence of further demethylations at C-4, involving the C-4 demethylation complex containing the C-4 methylsterol oxidases erg25A or erg25B, the sterol-4-alpha-carboxylate 3-dehydrogenase erg26 and the 3-keto-steroid reductase erg27, leads to the production of fecosterol via 4-methylfecosterol. The C-8 sterol isomerase erg2 then catalyzes the reaction which results in unsaturation at C-7 in the B ring of sterols and thus converts fecosterol to episterol. The sterol-C5-desaturase erg3B then catalyzes the introduction of a C-5 double bond in the B ring to produce 5-dehydroepisterol. The 2 other sterol-C5-desaturases, erg3A and erg3C, seem to be less important in ergosterol biosynthesis. The C-22 sterol desaturase erg5 further converts 5-dehydroepisterol into ergosta-5,7,22,24(28)-tetraen-3beta-ol by forming the C-22(23) double bond in the sterol side chain. Finally, ergosta-5,7,22,24(28)-tetraen-3beta-ol is substrate of the C-24(28) sterol reductases erg4A and erg4B to produce ergosterol. Possible alternative sterol biosynthetic pathways might exist from fecosterol to ergosterol, depending on the activities of the erg3 isoforms. This is C-8 sterol isomerase erg2 from Aspergillus fumigatus (strain ATCC MYA-4609 / CBS 101355 / FGSC A1100 / Af293) (Neosartorya fumigata).